The chain runs to 486 residues: CUGBP Elav-like family member 4 (486 aa).

The segment at 1–298 (MYIKMATLAN…AAFAAAQMQQ (298 aa)) is sufficient for RNA-binding and MSE-dependent splicing activity. Positions 18-28 (LSTNGLGSSPG) are enriched in polar residues. 2 disordered regions span residues 18–39 (LSTNGLGSSPGSAGHMNGLSHS) and 121–149 (LPGMNRPIQVKPADSESRGGSSCLRQPPS). The RRM 1 domain maps to 54–135 (IKLFIGQIPR…RPIQVKPADS (82 aa)). Positions 138-149 (RGGSSCLRQPPS) are enriched in polar residues. An RRM 2 domain is found at 152–232 (RKLFVGMLNK…SSLVVKFADT (81 aa)). A necessary for TNNT2 exon 5 inclusion region spans residues 239 to 258 (RRMQQMAGQMGMFNPMAIPF). The RRM 3 domain occupies 404–479 (PQPPPMIPQQ…KRLKVQLKRP (76 aa)).

Belongs to the CELF/BRUNOL family. As to expression, ubiquitous. Strongly expressed in the cerebellum, hippocampus, amygdala, temporal and frontal cortex and frontal lobes.

The protein resides in the nucleus. Its subcellular location is the cytoplasm. Its function is as follows. RNA-binding protein implicated in the regulation of pre-mRNA alternative splicing. Mediates exon inclusion and/or exclusion in pre-mRNA that are subject to tissue-specific and developmentally regulated alternative splicing. Specifically activates exon 5 inclusion of cardiac isoforms of TNNT2 during heart remodeling at the juvenile to adult transition. Promotes exclusion of both the smooth muscle (SM) and non-muscle (NM) exons in actinin pre-mRNAs. Activates the splicing of MAPT/Tau exon 10. Binds to muscle-specific splicing enhancer (MSE) intronic sites flanking the alternative exon 5 of TNNT2 pre-mRNA. The polypeptide is CUGBP Elav-like family member 4 (CELF4) (Homo sapiens (Human)).